A 257-amino-acid polypeptide reads, in one-letter code: Histidine/lysine/arginine/ornithine transport ATP-binding protein HisP (257 aa).

The 247-residue stretch at 6 to 252 folds into the ABC transporter domain; sequence LNVIDLHKRY…PQSPRLQRFL (247 aa). ATP-binding residues include Ser-40, Gly-41, Gly-43, Lys-44, Ser-45, and Thr-46.

Belongs to the ABC transporter superfamily. As to quaternary structure, the HisPMQJ complex is composed of two ATP-binding proteins (HisP), two transmembrane proteins (HisM and HisQ) and a solute-binding protein (HisJ). The HisPMQ-ArgT complex is composed of two ATP-binding proteins (HisP), two transmembrane proteins (HisM and HisQ) and a solute-binding protein (ArgT).

It is found in the cell inner membrane. The catalysed reaction is a polar amino acid(out) + ATP + H2O = a polar amino acid(in) + ADP + phosphate + H(+). It catalyses the reaction L-histidine(out) + ATP + H2O = L-histidine(in) + ADP + phosphate + H(+). It carries out the reaction L-lysine(out) + ATP + H2O = L-lysine(in) + ADP + phosphate + H(+). The enzyme catalyses L-arginine(out) + ATP + H2O = L-arginine(in) + ADP + phosphate + H(+). The catalysed reaction is L-ornithine(out) + ATP + H2O = L-ornithine(in) + ADP + phosphate + H(+). Its function is as follows. Part of the ABC transporter complex HisPMQJ involved in histidine transport. Is also part of the ABC transporter complex HisPMQ-ArgT involved in lysine/arginine/ornithine transport. Shows ATPase activity. Responsible for energy coupling to the transport system. The chain is Histidine/lysine/arginine/ornithine transport ATP-binding protein HisP from Escherichia coli (strain K12).